A 413-amino-acid polypeptide reads, in one-letter code: RNA-binding protein 41 (413 aa).

Residues 225–247 (SGSGTAEKPSLLQDKGKQAAQGK) form a disordered region. In terms of domain architecture, RRM spans 309–387 (KVLYLKNLSP…KILVIEFAKS (79 aa)).

Functionally, may bind RNA. This is RNA-binding protein 41 (Rbm41) from Mus musculus (Mouse).